A 285-amino-acid chain; its full sequence is Polyamine aminopropyltransferase (285 aa).

Residues glutamine 2–lysine 237 form the PABS domain. Position 31 (glutamine 31) interacts with S-methyl-5'-thioadenosine. Aspartate 86 lines the spermidine pocket. Residues glutamate 106 and aspartate 137 to glycine 138 contribute to the S-methyl-5'-thioadenosine site. The Proton acceptor role is filled by aspartate 155. Aspartate 155–aspartate 158 provides a ligand contact to spermidine.

This sequence belongs to the spermidine/spermine synthase family. Homodimer or homotetramer.

It is found in the cytoplasm. The catalysed reaction is S-adenosyl 3-(methylsulfanyl)propylamine + putrescine = S-methyl-5'-thioadenosine + spermidine + H(+). It functions in the pathway amine and polyamine biosynthesis; spermidine biosynthesis; spermidine from putrescine: step 1/1. Its function is as follows. Catalyzes the irreversible transfer of a propylamine group from the amino donor S-adenosylmethioninamine (decarboxy-AdoMet) to putrescine (1,4-diaminobutane) to yield spermidine. In Agathobacter rectalis (strain ATCC 33656 / DSM 3377 / JCM 17463 / KCTC 5835 / VPI 0990) (Eubacterium rectale), this protein is Polyamine aminopropyltransferase.